A 412-amino-acid polypeptide reads, in one-letter code: 1-deoxy-D-xylulose 5-phosphate reductoisomerase (412 aa).

Residues Thr10, Gly11, Ser12, Ile13, Gly36, Lys37, Asn38, and Asn130 each contribute to the NADPH site. Lys131 lines the 1-deoxy-D-xylulose 5-phosphate pocket. NADPH is bound at residue Glu132. Residue Asp156 participates in Mn(2+) binding. Residues Ser157, Glu158, Ser194, and His217 each coordinate 1-deoxy-D-xylulose 5-phosphate. Glu158 contacts Mn(2+). Residue Gly223 participates in NADPH binding. 1-deoxy-D-xylulose 5-phosphate is bound by residues Ser230, Asn235, Lys236, and Glu239. Position 239 (Glu239) interacts with Mn(2+).

It belongs to the DXR family. Mg(2+) serves as cofactor. The cofactor is Mn(2+).

The catalysed reaction is 2-C-methyl-D-erythritol 4-phosphate + NADP(+) = 1-deoxy-D-xylulose 5-phosphate + NADPH + H(+). The protein operates within isoprenoid biosynthesis; isopentenyl diphosphate biosynthesis via DXP pathway; isopentenyl diphosphate from 1-deoxy-D-xylulose 5-phosphate: step 1/6. Its function is as follows. Catalyzes the NADPH-dependent rearrangement and reduction of 1-deoxy-D-xylulose-5-phosphate (DXP) to 2-C-methyl-D-erythritol 4-phosphate (MEP). The chain is 1-deoxy-D-xylulose 5-phosphate reductoisomerase from Prochlorococcus marinus (strain NATL1A).